The chain runs to 415 residues: Tyrosine--tRNA ligase (415 aa).

Tyrosine 34 contributes to the L-tyrosine binding site. Residues 39-48 carry the 'HIGH' region motif; the sequence is PSADSLHLGN. Tyrosine 162 and glutamine 166 together coordinate L-tyrosine. Positions 224–228 match the 'KMSKS' region motif; that stretch reads KFGKS. Residue lysine 227 coordinates ATP. Residues 346–413 enclose the S4 RNA-binding domain; sequence IKIIDLLNLA…KRNYFLILWN (68 aa).

This sequence belongs to the class-I aminoacyl-tRNA synthetase family. TyrS type 1 subfamily. As to quaternary structure, homodimer.

Its subcellular location is the cytoplasm. It catalyses the reaction tRNA(Tyr) + L-tyrosine + ATP = L-tyrosyl-tRNA(Tyr) + AMP + diphosphate + H(+). In terms of biological role, catalyzes the attachment of tyrosine to tRNA(Tyr) in a two-step reaction: tyrosine is first activated by ATP to form Tyr-AMP and then transferred to the acceptor end of tRNA(Tyr). This is Tyrosine--tRNA ligase from Ureaplasma parvum serovar 3 (strain ATCC 27815 / 27 / NCTC 11736).